We begin with the raw amino-acid sequence, 201 residues long: Ras-related protein Rab-10 (201 aa).

Residue 16–23 coordinates GTP; it reads GDSGVGKT. The Effector region motif lies at 38-46; that stretch reads FISTIGIDF. GTP contacts are provided by residues 64 to 68, 122 to 125, and 152 to 154; these read DTAGQ, NKCD, and SAK. Residues 175 to 201 form a disordered region; that stretch reads PDSTDEQSRDTVNPVQPQRQSSSGGCC. Residues 184–201 are compositionally biased toward polar residues; the sequence is DTVNPVQPQRQSSSGGCC. 2 S-geranylgeranyl cysteine lipidation sites follow: C200 and C201.

It belongs to the small GTPase superfamily. Rab family. As to quaternary structure, interacts (GTP-bound form) with ehbp-1 (via C-terminal coiled coil). Interacts (GTP-bound form) with cnt-1 (via C-terminal ankyrin repeat). Interacts (GTP-bound form) with rab-5 GAP, tbc-2 (via putative coiled coil domain). Interacts (GTP-bound form) with amph-1. As to expression, almost ubiquitously expressed. Expressed in intestine, hypodermis, seam cells, body-wall muscles, many neurons, oviduct sheath cell, spermatheca, coelomocytes and pharyngeal and nerve ring.

The protein localises to the early endosome membrane. Its subcellular location is the late endosome membrane. It localises to the golgi apparatus membrane. It is found in the endosome membrane. It catalyses the reaction GTP + H2O = GDP + phosphate + H(+). With respect to regulation, rab activation is generally mediated by a guanine exchange factor (GEF), while inactivation through hydrolysis of bound GTP is catalyzed by a GTPase activating protein (GAP). Tbc-4 is a likely GAP of this rab. Denn-4 is a putative GEF of this rab. Functionally, the small GTPases Rab are key regulators of intracellular membrane trafficking, from the formation of transport vesicles to their fusion with membranes. Rabs cycle between an inactive GDP-bound form and an active GTP-bound form that is able to recruit to membranes different set of downstream effectors directly responsible for vesicle formation, movement, tethering and fusion. Required for basolateral endocytic recycling, the return of macromolecules and fluid from endosomes to the plasma membrane, in polarized epithelial cells of the intestine upstream of rme-1. Involved in the formation of the endosomal tubular network that is required for basolateral recycling of clathrin-independent endocytic cargo such as daf-4 in the intestine. Required for the recruitment of cnt-1 effector to endosomal membranes in the intestinal epithelium, which is important for the regulation of levels of endosomal phosphatidylinositol-4,5-bisphosphate, a key phosphoinositide in membrane traffic, and for the recruitment of endosomal membrane-bending proteins, rme-1 and sdpn-1. Recruits the rab-5 GTPase-activating protein tbc-2 to endosomes where it then inactivates rab-5 resulting in removal of rab-5 from membranes, which is necessary for cargo transport from early endosomes to recycling endosomes in the basolateral intestine. Regulates recycling of synaptic membrane AMPA glutamate receptor, glr-1, from intracellular endosomal compartments back to synapses in a cholesterol-dependent endocytosis pathway functioning after clathrin-independent endocytosis in command interneurons. Regulates neuropeptide release from dense core vesicles (DCVs) of cholinergic motoneurons in cooperation with rab-5. They reciprocally recruit each other's inactivating GAP molecule leading to local exclusion of one or the other rab protein at the Golgi-endosomal interphase at an essential stage during DCV sorting. Regulates membrane trafficking of membranes and dendrite proteins from the Golgi and/or endosomal compartments to plasma membrane during dendrite morphogenesis together with the exocyst complex in the multi-dendritic PVD sensory neurons acting in a cell-autonomous manner and requiring its GTPase activity. Functions cell-autonomously together with the exocyst complex to regulate dendrite morphogenesis and anterior-posterior patterning of the PVD neurons dendritic arbor by balancing the anterograde and retrograde transport via molecular motors unc-116 (kinesin heavy chain) and dhc-1 (dynein heavy chain) to appropriately transport branching factors, such as dma-1, to the specific subcellular regions of the developing dendrite in its GTPase activity-dependent manner. This chain is Ras-related protein Rab-10, found in Caenorhabditis elegans.